The following is a 150-amino-acid chain: MQIWVDADACPNVIKEILFRVANRVGIMVTLVANHHIRVPPSPHIRSTQVLAGFDVADDHIVQQAEPGDLVITADIPLADELITNGVHALNPRGELYTKDTIKQRLQMRDFMETMRSSGVQTGGPPPLNQGDRQNFANKLDTFLVKNFKK.

The protein belongs to the UPF0178 family.

The sequence is that of UPF0178 protein PBPRA1738 from Photobacterium profundum (strain SS9).